The chain runs to 200 residues: Holliday junction branch migration complex subunit RuvA (200 aa).

The domain I stretch occupies residues 1–63 (MIAFVRGQVA…EDSLTLFGFA (63 aa)). The domain II stretch occupies residues 64–142 (DEDEKQTFEL…APTGAGRSAG (79 aa)). Residues 142–146 (GVPAP) are flexible linker. The segment at 147 to 200 (AGAVWRDQVHQGLVGLGWPVRDAEKAVAAVAPEAGDVPDVAALLRAALRTLSKA) is domain III.

It belongs to the RuvA family. In terms of assembly, homotetramer. Forms an RuvA(8)-RuvB(12)-Holliday junction (HJ) complex. HJ DNA is sandwiched between 2 RuvA tetramers; dsDNA enters through RuvA and exits via RuvB. An RuvB hexamer assembles on each DNA strand where it exits the tetramer. Each RuvB hexamer is contacted by two RuvA subunits (via domain III) on 2 adjacent RuvB subunits; this complex drives branch migration. In the full resolvosome a probable DNA-RuvA(4)-RuvB(12)-RuvC(2) complex forms which resolves the HJ.

It localises to the cytoplasm. Functionally, the RuvA-RuvB-RuvC complex processes Holliday junction (HJ) DNA during genetic recombination and DNA repair, while the RuvA-RuvB complex plays an important role in the rescue of blocked DNA replication forks via replication fork reversal (RFR). RuvA specifically binds to HJ cruciform DNA, conferring on it an open structure. The RuvB hexamer acts as an ATP-dependent pump, pulling dsDNA into and through the RuvAB complex. HJ branch migration allows RuvC to scan DNA until it finds its consensus sequence, where it cleaves and resolves the cruciform DNA. In Nocardioides sp. (strain ATCC BAA-499 / JS614), this protein is Holliday junction branch migration complex subunit RuvA.